We begin with the raw amino-acid sequence, 83 residues long: Three-finger toxin MALT0066C (83 aa).

Positions 1 to 21 (MKTLLLTLVVVTIVCLDFGHT) are cleaved as a signal peptide. 4 disulfide bridges follow: Cys24–Cys45, Cys38–Cys62, Cys64–Cys75, and Cys76–Cys81.

It belongs to the three-finger toxin family. Short-chain subfamily. Type I alpha-neurotoxin sub-subfamily. Dimer. As to expression, expressed by the venom gland.

The protein resides in the secreted. Binds to muscle nicotinic acetylcholine receptor (nAChR) and inhibit acetylcholine from binding to the receptor, thereby impairing neuromuscular transmission. The protein is Three-finger toxin MALT0066C of Micrurus altirostris (Uruguayan coral snake).